A 226-amino-acid chain; its full sequence is ATP synthase F(0) complex subunit a (226 aa).

6 helical membrane-spanning segments follow: residues 12–32 (PTMM…ILFP), 68–88 (WALM…LGLL), 97–117 (QLSM…ITGF), 138–158 (IPML…ALAV), 164–184 (ITAG…LMDI), and 189–209 (AFIT…VALI).

Belongs to the ATPase A chain family. In terms of assembly, component of the ATP synthase complex composed at least of ATP5F1A/subunit alpha, ATP5F1B/subunit beta, ATP5MC1/subunit c (homooctomer), MT-ATP6/subunit a, MT-ATP8/subunit 8, ATP5ME/subunit e, ATP5MF/subunit f, ATP5MG/subunit g, ATP5MK/subunit k, ATP5MJ/subunit j, ATP5F1C/subunit gamma, ATP5F1D/subunit delta, ATP5F1E/subunit epsilon, ATP5PF/subunit F6, ATP5PB/subunit b, ATP5PD/subunit d, ATP5PO/subunit OSCP. ATP synthase complex consists of a soluble F(1) head domain (subunits alpha(3) and beta(3)) - the catalytic core - and a membrane F(0) domain - the membrane proton channel (subunits c, a, 8, e, f, g, k and j). These two domains are linked by a central stalk (subunits gamma, delta, and epsilon) rotating inside the F1 region and a stationary peripheral stalk (subunits F6, b, d, and OSCP). Interacts with DNAJC30; interaction is direct.

Its subcellular location is the mitochondrion inner membrane. It catalyses the reaction H(+)(in) = H(+)(out). Functionally, subunit a, of the mitochondrial membrane ATP synthase complex (F(1)F(0) ATP synthase or Complex V) that produces ATP from ADP in the presence of a proton gradient across the membrane which is generated by electron transport complexes of the respiratory chain. ATP synthase complex consist of a soluble F(1) head domain - the catalytic core - and a membrane F(1) domain - the membrane proton channel. These two domains are linked by a central stalk rotating inside the F(1) region and a stationary peripheral stalk. During catalysis, ATP synthesis in the catalytic domain of F(1) is coupled via a rotary mechanism of the central stalk subunits to proton translocation. With the subunit c (ATP5MC1), forms the proton-conducting channel in the F(0) domain, that contains two crucial half-channels (inlet and outlet) that facilitate proton movement from the mitochondrial intermembrane space (IMS) into the matrix. Protons are taken up via the inlet half-channel and released through the outlet half-channel, following a Grotthuss mechanism. The protein is ATP synthase F(0) complex subunit a of Halichoerus grypus (Gray seal).